A 307-amino-acid polypeptide reads, in one-letter code: D-alanine--D-alanine ligase (307 aa).

One can recognise an ATP-grasp domain in the interval 108 to 301 (KEVFAAAGLP…FPEFCAWLVE (194 aa)). An ATP-binding site is contributed by 135–185 (LPPPYVVKPNAEGSSVGVYIVHEDANGPPQLAADMPQDLMVETYVPGRELT). Mg(2+)-binding residues include Asp-252, Glu-268, and Asn-270.

The protein belongs to the D-alanine--D-alanine ligase family. The cofactor is Mg(2+). It depends on Mn(2+) as a cofactor.

It localises to the cytoplasm. The enzyme catalyses 2 D-alanine + ATP = D-alanyl-D-alanine + ADP + phosphate + H(+). The protein operates within cell wall biogenesis; peptidoglycan biosynthesis. Its function is as follows. Cell wall formation. In Cereibacter sphaeroides (strain ATCC 17029 / ATH 2.4.9) (Rhodobacter sphaeroides), this protein is D-alanine--D-alanine ligase.